The chain runs to 123 residues: Large ribosomal subunit protein bL12 (123 aa).

It belongs to the bacterial ribosomal protein bL12 family. In terms of assembly, homodimer. Part of the ribosomal stalk of the 50S ribosomal subunit. Forms a multimeric L10(L12)X complex, where L10 forms an elongated spine to which 2 to 4 L12 dimers bind in a sequential fashion. Binds GTP-bound translation factors.

In terms of biological role, forms part of the ribosomal stalk which helps the ribosome interact with GTP-bound translation factors. Is thus essential for accurate translation. The sequence is that of Large ribosomal subunit protein bL12 from Dechloromonas aromatica (strain RCB).